Consider the following 633-residue polypeptide: Extracellular metalloproteinase 3 (633 aa).

Residues 1–18 (MHGLLLAGLLALPMNVLA) form the signal peptide. Positions 19–246 (HPAEQHASNV…VHNVVDYVAS (228 aa)) are excised as a propeptide. Residue Asn410 is glycosylated (N-linked (GlcNAc...) asparagine). His429 is a binding site for Zn(2+). The active site involves Glu430. His433 contacts Zn(2+). N-linked (GlcNAc...) asparagine glycans are attached at residues Asn480 and Asn622.

The protein belongs to the peptidase M36 family. Zn(2+) is required as a cofactor.

Its subcellular location is the secreted. Secreted metalloproteinase probably acting as a virulence factor. The chain is Extracellular metalloproteinase 3 (MEP3) from Arthroderma benhamiae (Trichophyton mentagrophytes).